We begin with the raw amino-acid sequence, 334 residues long: 4-hydroxyproline 2-epimerase (334 aa).

Catalysis depends on Cys-90, which acts as the Proton acceptor. Residues 91 to 92, His-223, and Asp-249 each bind substrate; that span reads GH. The active-site Proton donor is the Cys-253. 254-255 provides a ligand contact to substrate; sequence GT.

It belongs to the proline racemase family. Homodimer.

It catalyses the reaction trans-4-hydroxy-L-proline = cis-4-hydroxy-D-proline. Catalyzes the epimerization of trans-4-hydroxy-L-proline (t4LHyp) to cis-4-hydroxy-D-proline (c4DHyp). Is likely involved in a degradation pathway that converts t4LHyp to alpha-ketoglutarate, which would allow P.denitrificans to grow on t4LHyp as a sole carbon source. Also seems to be involved in an alternative catabolic pathway that degrades trans-4-hydroxy-L-proline betaine (tHyp-B) to alpha-ketoglutarate; this pathway would permit the utilization of tHyp-B as a sole carbon and nitrogen source. This Paracoccus denitrificans (strain Pd 1222) protein is 4-hydroxyproline 2-epimerase (hypF).